The sequence spans 131 residues: Small ribosomal subunit protein uS8 (131 aa).

This sequence belongs to the universal ribosomal protein uS8 family. In terms of assembly, part of the 30S ribosomal subunit. Contacts proteins S5 and S12.

Its function is as follows. One of the primary rRNA binding proteins, it binds directly to 16S rRNA central domain where it helps coordinate assembly of the platform of the 30S subunit. This chain is Small ribosomal subunit protein uS8, found in Mesomycoplasma hyopneumoniae (strain 7448) (Mycoplasma hyopneumoniae).